The chain runs to 353 residues: UPF0421 protein YgaE (353 aa).

Transmembrane regions (helical) follow at residues 20-40 (LASW…IFAI), 67-87 (VFGL…VIVI), 103-123 (LVTV…FALI), and 125-145 (TSTV…FLPP).

Belongs to the UPF0421 family.

It is found in the cell membrane. This Bacillus subtilis (strain 168) protein is UPF0421 protein YgaE (ygaE).